A 704-amino-acid chain; its full sequence is Cystathionine beta-synthase cbs-1 (704 aa).

Pyridoxal 5'-phosphate is bound by residues Asn454, 562 to 566 (GTGGT), and Ser652.

It belongs to the cysteine synthase/cystathionine beta-synthase family. In terms of assembly, monomer. As to quaternary structure, does not bind pyridoxal 5'-phosphate, PLP; which may explain why this isoform has virtually undetectable catalytic activity. It depends on pyridoxal 5'-phosphate as a cofactor.

The protein resides in the cytoplasm. It catalyses the reaction L-homocysteine + L-serine = L,L-cystathionine + H2O. The protein operates within amino-acid biosynthesis; L-cysteine biosynthesis; L-cysteine from L-homocysteine and L-serine: step 1/2. In terms of biological role, hydro-lyase catalyzing the first step of the transsulfuration pathway, where the hydroxyl group of L-serine is displaced by L-homocysteine in a beta-replacement reaction to form L-cystathionine, the precursor of L-cysteine. Plays a role in maintaining homocysteine homeostasis. Involved in cold-induced somatic longevity mediated by prostaglandin E2 (PGE2) signals from adult germ cells, perhaps acting via a role in the production of hydrogen sulfide (H2S). Required for normal development. The chain is Cystathionine beta-synthase cbs-1 from Caenorhabditis elegans.